Here is a 376-residue protein sequence, read N- to C-terminus: MASKDYYEVLGLSKGASDDEIKKAYRKLAMKYHPDRNQGNKEAEEKFKDINEAYQVLSDPQKKANYDQFGSADFNGGGFGGFGGGGFSGMGGFEDIFDSFFGGGFSSRRRNGPERGADLEYTVSLTFEEAVFGVEKEISITRNEKCDTCAGSGAKPGTDSKTCDKCGGTGQVRVQRNTPLGSFVSTSTCDKCGGSGKVIDEPCTTCHGKGTVRKNKKIKINIPAGVDTGNVLPLRGQGEPGKNGGPNGDLYINIRVSSHKNFERRGFDIYIKEHISFGKAVLGTEITVPTVDGSVKYKIPAGTQSGTTFRLKGKGVPRVNGHGRGNQYVKVIVDVPKAINEKQKAALIAFMEASGEKLGSDLGKETIVDKIKKSFK.

The J domain occupies 5–70; it reads DYYEVLGLSK…QKKANYDQFG (66 aa). The CR-type zinc finger occupies 133–215; sequence GVEKEISITR…CHGKGTVRKN (83 aa). Residues Cys-146, Cys-149, Cys-163, Cys-166, Cys-189, Cys-192, Cys-203, and Cys-206 each coordinate Zn(2+). 4 CXXCXGXG motif repeats span residues 146–153, 163–170, 189–196, and 203–210; these read CDTCAGSG, CDKCGGTG, CDKCGGSG, and CTTCHGKG.

The protein belongs to the DnaJ family. As to quaternary structure, homodimer. Requires Zn(2+) as cofactor.

Its subcellular location is the cytoplasm. Participates actively in the response to hyperosmotic and heat shock by preventing the aggregation of stress-denatured proteins and by disaggregating proteins, also in an autonomous, DnaK-independent fashion. Unfolded proteins bind initially to DnaJ; upon interaction with the DnaJ-bound protein, DnaK hydrolyzes its bound ATP, resulting in the formation of a stable complex. GrpE releases ADP from DnaK; ATP binding to DnaK triggers the release of the substrate protein, thus completing the reaction cycle. Several rounds of ATP-dependent interactions between DnaJ, DnaK and GrpE are required for fully efficient folding. Also involved, together with DnaK and GrpE, in the DNA replication of plasmids through activation of initiation proteins. The protein is Chaperone protein DnaJ of Clostridium novyi (strain NT).